The sequence spans 509 residues: Heat shock 70 kDa protein 14 (509 aa).

It belongs to the heat shock protein 70 family. Component of ribosome-associated complex (RAC), a heterodimer composed of Hsp70/DnaK-type chaperone HSPA14 and Hsp40/DnaJ-type chaperone DNAJC2.

It localises to the cytoplasm. The protein resides in the cytosol. Functionally, component of the ribosome-associated complex (RAC), a complex involved in folding or maintaining nascent polypeptides in a folding-competent state. In the RAC complex, binds to the nascent polypeptide chain, while DNAJC2 stimulates its ATPase activity. This Pongo abelii (Sumatran orangutan) protein is Heat shock 70 kDa protein 14 (HSPA14).